The primary structure comprises 349 residues: Eukaryotic translation initiation factor 3 subunit I (349 aa).

WD repeat units lie at residues 8–49 (GHER…GTLE), 51–91 (HIGT…QSWE), 93–135 (PTPV…DYTK), 148–187 (SDAK…FIET), 197–239 (EKIA…KVYK), and 295–336 (GHFG…FEFD).

Belongs to the eIF-3 subunit I family. As to quaternary structure, component of the eukaryotic translation initiation factor 3 (eIF-3) complex.

It localises to the cytoplasm. Component of the eukaryotic translation initiation factor 3 (eIF-3) complex, which is involved in protein synthesis of a specialized repertoire of mRNAs and, together with other initiation factors, stimulates binding of mRNA and methionyl-tRNAi to the 40S ribosome. The eIF-3 complex specifically targets and initiates translation of a subset of mRNAs involved in cell proliferation. The protein is Eukaryotic translation initiation factor 3 subunit I of Debaryomyces hansenii (strain ATCC 36239 / CBS 767 / BCRC 21394 / JCM 1990 / NBRC 0083 / IGC 2968) (Yeast).